We begin with the raw amino-acid sequence, 204 residues long: Probable nicotinate-nucleotide adenylyltransferase (204 aa).

Belongs to the NadD family.

It catalyses the reaction nicotinate beta-D-ribonucleotide + ATP + H(+) = deamido-NAD(+) + diphosphate. The protein operates within cofactor biosynthesis; NAD(+) biosynthesis; deamido-NAD(+) from nicotinate D-ribonucleotide: step 1/1. Functionally, catalyzes the reversible adenylation of nicotinate mononucleotide (NaMN) to nicotinic acid adenine dinucleotide (NaAD). The chain is Probable nicotinate-nucleotide adenylyltransferase from Mycolicibacterium gilvum (strain PYR-GCK) (Mycobacterium gilvum (strain PYR-GCK)).